Here is an 84-residue protein sequence, read N- to C-terminus: Esculentin-1B (84 aa).

The signal sequence occupies residues 1-22 (MFTLKKPLLLIVLLGMISLSLC). Residues 23–38 (EQERNADEEEGSEIKR) constitute a propeptide that is removed on maturation. C78 and C84 form a disulfide bridge.

Belongs to the frog skin active peptide (FSAP) family. Brevinin subfamily. Expressed by the skin glands.

The protein resides in the secreted. In terms of biological role, shows antibacterial activity against representative Gram-negative and Gram-positive bacterial species, and hemolytic activity. The sequence is that of Esculentin-1B from Pelophylax lessonae (Pool frog).